The chain runs to 485 residues: Amidophosphoribosyltransferase, chloroplastic (485 aa).

The transit peptide at 1–18 (KTTNTFASVNDDEKPREE) directs the protein to the chloroplast. The Nucleophile role is filled by C19. In terms of domain architecture, Glutamine amidotransferase type-2 spans 19–237 (CGVVGIYGDP…PGEVVVVDHT (219 aa)). C253 contacts [4Fe-4S] cluster. Positions 300, 362, and 363 each coordinate Mg(2+). [4Fe-4S] cluster is bound by residues C399, C450, and C453.

In the C-terminal section; belongs to the purine/pyrimidine phosphoribosyltransferase family. It depends on Mg(2+) as a cofactor. [4Fe-4S] cluster is required as a cofactor.

It is found in the plastid. The protein localises to the chloroplast. It catalyses the reaction 5-phospho-beta-D-ribosylamine + L-glutamate + diphosphate = 5-phospho-alpha-D-ribose 1-diphosphate + L-glutamine + H2O. It participates in purine metabolism; IMP biosynthesis via de novo pathway; N(1)-(5-phospho-D-ribosyl)glycinamide from 5-phospho-alpha-D-ribose 1-diphosphate: step 1/2. The sequence is that of Amidophosphoribosyltransferase, chloroplastic (PUR1) from Vigna aconitifolia (Moth bean).